Here is a 193-residue protein sequence, read N- to C-terminus: Fe/S biogenesis protein NfuA (193 aa).

Residues Cys-150 and Cys-153 each contribute to the [4Fe-4S] cluster site.

It belongs to the NfuA family. In terms of assembly, homodimer. The cofactor is [4Fe-4S] cluster.

Its function is as follows. Involved in iron-sulfur cluster biogenesis. Binds a 4Fe-4S cluster, can transfer this cluster to apoproteins, and thereby intervenes in the maturation of Fe/S proteins. Could also act as a scaffold/chaperone for damaged Fe/S proteins. This is Fe/S biogenesis protein NfuA from Histophilus somni (strain 129Pt) (Haemophilus somnus).